The chain runs to 170 residues: Lipoprotein signal peptidase (170 aa).

A run of 5 helical transmembrane segments spans residues 13–33 (IFISILVFFDQWSKYLVVTYV), 72–92 (LFFLIIPIIILVFVFSFSLKE), 96–113 (VSRFALILILSGGIGNII), 116–136 (LFRPLGVVDFLDVKFFGIFGL), and 142–162 (FNFADSYVVVGMIVFIIYDLF). Active-site residues include Asp124 and Asp146.

The protein belongs to the peptidase A8 family.

It is found in the cell inner membrane. It carries out the reaction Release of signal peptides from bacterial membrane prolipoproteins. Hydrolyzes -Xaa-Yaa-Zaa-|-(S,diacylglyceryl)Cys-, in which Xaa is hydrophobic (preferably Leu), and Yaa (Ala or Ser) and Zaa (Gly or Ala) have small, neutral side chains.. It functions in the pathway protein modification; lipoprotein biosynthesis (signal peptide cleavage). Its function is as follows. This protein specifically catalyzes the removal of signal peptides from prolipoproteins. The sequence is that of Lipoprotein signal peptidase from Borrelia duttonii (strain Ly).